Consider the following 1014-residue polypeptide: Probable sucrose-phosphate synthase 5 (1014 aa).

Basic and acidic residues-rich tracts occupy residues 29–41 (RRLE…REAA) and 49–58 (EGEKDGKPDT). Disordered regions lie at residues 29–108 (RRLE…SDEE) and 648–677 (QLLR…SSEP).

It belongs to the glycosyltransferase 1 family. As to quaternary structure, homodimer or homotetramer. In terms of tissue distribution, expressed in germinating seeds.

The enzyme catalyses beta-D-fructose 6-phosphate + UDP-alpha-D-glucose = sucrose 6(F)-phosphate + UDP + H(+). It participates in glycan biosynthesis; sucrose biosynthesis; sucrose from D-fructose 6-phosphate and UDP-alpha-D-glucose: step 1/2. Activity is regulated by phosphorylation and moderated by concentration of metabolites and light. Functionally, plays a role in photosynthetic sucrose synthesis by catalyzing the rate-limiting step of sucrose biosynthesis from UDP-glucose and fructose- 6-phosphate. Involved in the regulation of carbon partitioning in the leaves of plants. May regulate the synthesis of sucrose and therefore play a major role as a limiting factor in the export of photoassimilates out of the leaf. Plays a role for sucrose availability that is essential for plant growth and fiber elongation. This is Probable sucrose-phosphate synthase 5 (SPS5) from Oryza sativa subsp. japonica (Rice).